A 1875-amino-acid polypeptide reads, in one-letter code: MLGSSVKSVQPEVELSGGSGSGGDEGADESRGASRKAAAADGRGMLPKRAKAAGGSGSMAKASAAELKVFKSGSVDSRVPGGLPTSNLRKQKSLTNLSFLTDSEKKLQLYEPEWSDDMAKAPKGLGKLGPKGRETPLMSKTLSKSEHSLFQPKGGSTGGAKTPLAPLAPSLGKPSRIPRGPYAEVKPLSKAPEAAVSDDGKSDDELLSSKAKAQKGSGTVPSAKGQEERAFLKVDPELVVTVLGDLEQLLFSQMLDPESQRKRTVQNVLDLRQNLEETMSSLRGSQVTHSSLEMPCYDSDDANPRSVSSLSNRSSPLSWRYGQSSPRLQAGDAPSVGGSCRSEGPPAWYMHGERAHYSHTMPMRSPSKLSHISRLELVESLDSDEVDLKSGYMSDSDLMGKTMTEDDDITTGWDESSSISSGLSDASDNLSSEEFNASSSLNSLPTTPTASRRSSTIVLRTDSEKRSLAESGLNWFSESEEKTPKKLEYDSGSLKMEPGTSKWRRERPESCDDASKGGELKKPISLGHPGSLKKGKTPPVAVTSPITHTAQSALKVAGKPEGKATDKGKLAVKNTGLQRSSSDAGRDRLSDAKKPPSGIARPSTSGSFGYKKPPPATGTATVMQTGSSATLSKIQKSSGIPVKPVNGRKTSLDVSNSVEPGFLAPGARSNIQYRSLPRPAKSSSMSVTGRGGPRPVSSSIDPSLLSTKQGGLTPSRLKEPSKVASGRSTPAPVNQTDREKEKAKAKAVALDSDNISLKSIGSPESTPKNQASHPPATKLAELPPTPLRATAKSFVKPPSLANLDKVNSNSLDLPSSSDTHASKVPDLHAPSSSTGGPLPSCFTPSPAPILNINSASFSQGLELMSGFSVPKETRMYPKLSGLHRSMESLQMPMSLPSAFPSSAPIPTPPTAPSEEDTEELPWSGSPRAGQLDSSQRDRNTLPKKGLRYQLQSQEETKERRHSHTAGGLPESDDQAELPSPPALSMSLSAKGQLTNIVSPTAATTPRITRSNSIPTHEAAFELYSGSQMGSTLSLAERPKGMIRSGSFRDPTDDVHGSVLSLASSASSTYSSAEERMQSEQIRKLRRELESSQEKVATLTSQLSANANLVAAFEQSLVNMTSRLRHLAETAEEKDTELLDLRETIDFLKKKNSEAQAVIQGALNASEATPKELRIKRQNSSDSISSLNSITSHSSIGSSKDADAKKKKKKSWVYELRSSFNKAFSIKKGPKSASSYSDIEEIATPDSSAPSSPKLQHGSTETASPSIKSSTSSSVGTEVTETPAHSVPHTRLFQANEEEEPEKKEVSELRSELWEKEMKLTDIRLEALNSAHQLDQLRETMHNMQLEVDLLKAENDRLKVAPGPSSGCTPGQVPGSSALSSPRRSLGLALSHPFSPSLTDTDLSPMDGISTCGSKEEVTLRVVVRMPPQHIIKGDLKQQEFFLGCSKVSGKVDWKMLDEAVFQVFKDYISKMDPASTLGLSTESIHGYSLSHVKRVLDAEPPEMPPCRRGVNNISVALKGLKEKCVDSLVFETLIPKPMMQHYISLLLKHRRLVLSGPSGTGKTYLTNRLAEYLVERSGREVTDGIVSTFNMHQQSCKDLQLYLSNLANQIDRETGIGDVPLVILLDDLSEAGSISELVNGALTCKYHKCPYIIGTTNQPVKMTPNHGLHLSFRMLTFSNNVEPANGFLVRYLRRKLVESDSDVNANKEELLRVLDWVPKLWYHLHTFLEKHSTSDFLIGPCFFLSCPIGIEDFRTWFIDLWNNSIIPYLQEGAKDGIKVHGQKAAWEDPVEWVRDTLPWPSAQQDQSKLYHLPPPSVGPHSTASPPEDRTVKDSTPNSLDSDPLMAMLLKLQEAANYIESPDRETILDPNLQATL.

Met-1 is modified (N-acetylmethionine). The interval 1–63 is disordered; the sequence is MLGSSVKSVQ…GGSGSMAKAS (63 aa). A phosphoserine mark is found at Ser-93 and Ser-145. Disordered regions lie at residues 115–230 and 280–339; these read SDDM…EERA and SSLR…VGGS. Thr-162 is modified (phosphothreonine). 2 positions are modified to phosphoserine: Ser-197 and Ser-202. Residues 258-283 are a coiled coil; it reads ESQRKRTVQNVLDLRQNLEETMSSLR. Over residues 280–291 the composition is skewed to polar residues; it reads SSLRGSQVTHSS. Phosphoserine occurs at positions 299, 311, 315, 365, and 394. Low complexity predominate over residues 304-318; that stretch reads PRSVSSLSNRSSPLS. Disordered regions lie at residues 391 to 463 and 477 to 783; these read GYMS…RTDS and SESE…AELP. 2 stretches are compositionally biased toward low complexity: residues 414–428 and 436–456; these read DESS…DASD and NASS…RSST. A phosphoserine mark is found at Ser-455, Ser-477, Ser-479, and Ser-493. Residues 479–489 show a composition bias toward basic and acidic residues; the sequence is SEEKTPKKLEY. Over residues 506 to 522 the composition is skewed to basic and acidic residues; the sequence is ERPESCDDASKGGELKK. The residue at position 531 (Ser-531) is a Phosphoserine. Thr-537 is subject to Phosphothreonine. Phosphoserine is present on Ser-544. Thr-547 bears the Phosphothreonine mark. The segment covering 558–569 has biased composition (basic and acidic residues); that stretch reads GKPEGKATDKGK. The residue at position 575 (Thr-575) is a Phosphothreonine. Basic and acidic residues predominate over residues 584–594; sequence AGRDRLSDAKK. Polar residues-rich tracts occupy residues 618 to 638 and 648 to 658; these read GTAT…QKSS and RKTSLDVSNSV. Ser-651 carries the post-translational modification Phosphoserine. Arg-690 is modified (omega-N-methylarginine). Composition is skewed to polar residues over residues 696 to 712 and 726 to 735; these read VSSS…QGGL and GRSTPAPVNQ. Residues 733-758 are a coiled coil; sequence VNQTDREKEKAKAKAVALDSDNISLK. Phosphoserine is present on residues Ser-752, Ser-756, Ser-762, Ser-799, and Ser-810. Positions 753 to 772 are enriched in polar residues; that stretch reads DNISLKSIGSPESTPKNQAS. Disordered stretches follow at residues 800–840 and 893–982; these read LANL…PLPS and MSLP…SPPA. 2 stretches are compositionally biased toward low complexity: residues 807-818 and 893-902; these read NSNSLDLPSSSD and MSLPSAFPSS. Ser-998 carries the phosphoserine modification. Position 1004 is a phosphothreonine (Thr-1004). A coiled-coil region spans residues 1070 to 1161; the sequence is SSAEERMQSE…SEAQAVIQGA (92 aa). Thr-1168 is subject to Phosphothreonine. 4 disordered regions span residues 1172–1202, 1242–1306, 1359–1381, and 1808–1841; these read LRIK…KDAD, ATPD…KEVS, VAPG…LSSP, and KLYH…SLDS. Ser-1179 bears the Phosphoserine mark. The span at 1179-1198 shows a compositional bias: low complexity; sequence SSDSISSLNSITSHSSIGSS. The span at 1244-1259 shows a compositional bias: polar residues; the sequence is PDSSAPSSPKLQHGST. A compositionally biased stretch (low complexity) spans 1260–1281; that stretch reads ETASPSIKSSTSSSVGTEVTET. Ser-1263 is subject to Phosphoserine. Residues 1301–1360 are a coiled coil; it reads EKKEVSELRSELWEKEMKLTDIRLEALNSAHQLDQLRETMHNMQLEVDLLKAENDRLKVA. The segment covering 1365-1381 has biased composition (polar residues); sequence SGCTPGQVPGSSALSSP. Ser-1380 carries the post-translational modification Phosphoserine.

It belongs to the Nav/unc-53 family. As to quaternary structure, interacts with tubulin. Expressed in heart and brain. Present in brain (at protein level). In adult brain, found almost exclusively in areas of secondary neurogenesis from the hippocampus and the subventricular zone.

The protein localises to the cytoplasm. The protein resides in the cytoskeleton. Functionally, may be involved in neuronal migration. This chain is Neuron navigator 1 (Nav1), found in Mus musculus (Mouse).